A 411-amino-acid polypeptide reads, in one-letter code: Putative ion-transport protein YfeO (411 aa).

Transmembrane regions (helical) follow at residues 9-29 (MLLL…VLIA), 54-74 (DSPF…GLII), 99-119 (ALPG…SLGP), 149-169 (ILAS…AALI), 186-206 (LFAP…FFHP), 223-243 (IASG…AVWC), 258-278 (VLIL…GGPL), 296-316 (LGAG…VIAA), 322-342 (GGRI…LHAH), 343-363 (VEAV…VLVV), and 386-406 (LLCI…LLAA).

It belongs to the chloride channel (TC 2.A.49) family.

The protein resides in the cell membrane. The chain is Putative ion-transport protein YfeO from Salmonella paratyphi A (strain ATCC 9150 / SARB42).